The following is a 731-amino-acid chain: E3 ubiquitin-protein ligase SMURF1 (731 aa).

The region spanning 1–120 (MSNVVTRRGG…TGYQRLDLCK (120 aa)) is the C2 domain. Residues 210–235 (RVRGPEVREHVQTPQNRSHGFQSQDL) are disordered. Positions 221–234 (QTPQNRSHGFQSQD) are enriched in polar residues. WW domains lie at 233–266 (QDLP…DPRI) and 279–312 (GSLP…DPRL). Residues 394–731 (RPKDLKKRLM…VEETSGFAVE (338 aa)) form the HECT domain. C699 (glycyl thioester intermediate) is an active-site residue.

The protein localises to the cytoplasm. It localises to the cell membrane. It catalyses the reaction S-ubiquitinyl-[E2 ubiquitin-conjugating enzyme]-L-cysteine + [acceptor protein]-L-lysine = [E2 ubiquitin-conjugating enzyme]-L-cysteine + N(6)-ubiquitinyl-[acceptor protein]-L-lysine.. The protein operates within protein modification; protein ubiquitination. In terms of biological role, E3 ubiquitin-protein ligase that acts as a negative regulator of BMP signaling pathway. Mediates ubiquitination and degradation of smad1 and smad5, 2 receptor-regulated SMADs specific for the BMP pathway. Promotes ubiquitination and subsequent proteasomal degradation of TRAF family members and rhoa. May play a role in dendrite formation by melanocytes. This chain is E3 ubiquitin-protein ligase SMURF1 (smurf1), found in Xenopus laevis (African clawed frog).